Here is a 384-residue protein sequence, read N- to C-terminus: Acetylornithine aminotransferase (384 aa).

Pyridoxal 5'-phosphate-binding positions include 94 to 95 (GT) and Phe-121. Arg-124 provides a ligand contact to N(2)-acetyl-L-ornithine. 206 to 209 (DEVQ) provides a ligand contact to pyridoxal 5'-phosphate. Lys-235 bears the N6-(pyridoxal phosphate)lysine mark. Residue Ser-263 coordinates N(2)-acetyl-L-ornithine. Thr-264 is a binding site for pyridoxal 5'-phosphate.

Belongs to the class-III pyridoxal-phosphate-dependent aminotransferase family. ArgD subfamily. Homodimer. Pyridoxal 5'-phosphate serves as cofactor.

The protein resides in the cytoplasm. It carries out the reaction N(2)-acetyl-L-ornithine + 2-oxoglutarate = N-acetyl-L-glutamate 5-semialdehyde + L-glutamate. Its pathway is amino-acid biosynthesis; L-arginine biosynthesis; N(2)-acetyl-L-ornithine from L-glutamate: step 4/4. The polypeptide is Acetylornithine aminotransferase (Listeria innocua serovar 6a (strain ATCC BAA-680 / CLIP 11262)).